The following is a 371-amino-acid chain: NDMA-dependent alcohol dehydrogenase (371 aa).

Residues cysteine 40, histidine 61, cysteine 91, cysteine 94, cysteine 97, cysteine 105, and cysteine 167 each coordinate Zn(2+).

Belongs to the zinc-containing alcohol dehydrogenase family. In terms of assembly, homotrimer. NADH serves as cofactor.

The enzyme catalyses N,N-dimethyl-4-nitrosoaniline + a primary alcohol = 4-(hydroxylamino)-N,N-dimethylaniline + an aldehyde. It catalyses the reaction ethanol + A = acetaldehyde + AH2. Its activity is regulated as follows. Inhibited by trans-4-(N,N-dimethylamino)-cinnamaldehyde through direct binding to the catalytic zinc ion in a substrate-like geometry. Isobutyramide acts as a competitive inhibitor with respect to the electron acceptor NDMA. Acetaldehyde, AMP, ADP, ATP, as well as CuSO(4), FeSO(4), HgCl(2), NiCl(2), ZnSO(4), KCN, and NaN(3) are additional inhibitors of the catalytic activity. Catalytically different from common alcohol dehydrogenases. Effective in oxidizing ethanol, other primary alcohols and benzylalcohol only in the presence of p-nitroso-N,N-dimethylaniline (NDMA) as an electron acceptor. NADH acts as a cofactor here instead as a coenzyme. The protein is NDMA-dependent alcohol dehydrogenase of Amycolatopsis methanolica.